The following is a 420-amino-acid chain: Glucose-1-phosphate adenylyltransferase (420 aa).

Alpha-D-glucose 1-phosphate-binding positions include Tyr107, Gly172, Glu187–Lys188, and Ser205.

Belongs to the bacterial/plant glucose-1-phosphate adenylyltransferase family. Homotetramer.

It catalyses the reaction alpha-D-glucose 1-phosphate + ATP + H(+) = ADP-alpha-D-glucose + diphosphate. It functions in the pathway glycan biosynthesis; glycogen biosynthesis. Its function is as follows. Involved in the biosynthesis of ADP-glucose, a building block required for the elongation reactions to produce glycogen. Catalyzes the reaction between ATP and alpha-D-glucose 1-phosphate (G1P) to produce pyrophosphate and ADP-Glc. The chain is Glucose-1-phosphate adenylyltransferase from Rhizobium etli (strain CIAT 652).